Reading from the N-terminus, the 269-residue chain is Ribosomal RNA small subunit methyltransferase A (269 aa).

The S-adenosyl-L-methionine site is built by isoleucine 17, glycine 42, glutamate 64, aspartate 89, and asparagine 109.

The protein belongs to the class I-like SAM-binding methyltransferase superfamily. rRNA adenine N(6)-methyltransferase family. RsmA subfamily.

It localises to the cytoplasm. The catalysed reaction is adenosine(1518)/adenosine(1519) in 16S rRNA + 4 S-adenosyl-L-methionine = N(6)-dimethyladenosine(1518)/N(6)-dimethyladenosine(1519) in 16S rRNA + 4 S-adenosyl-L-homocysteine + 4 H(+). In terms of biological role, specifically dimethylates two adjacent adenosines (A1518 and A1519) in the loop of a conserved hairpin near the 3'-end of 16S rRNA in the 30S particle. May play a critical role in biogenesis of 30S subunits. The chain is Ribosomal RNA small subunit methyltransferase A from Anaplasma phagocytophilum (strain HZ).